We begin with the raw amino-acid sequence, 499 residues long: Putative antiporter subunit mnhD2 (499 aa).

A run of 14 helical transmembrane segments spans residues 3-23, 32-52, 78-98, 108-128, 130-150, 161-181, 206-226, 240-260, 273-293, 308-328, 330-350, 368-388, 403-423, and 450-470; these read SNLL…LVFT, ILYI…LIYV, LSLV…SYGF, YYLP…FLTS, LFNL…LVTL, IIYV…IGLL, IIII…LVLF, LAAL…IRFF, PLLV…VIAY, IGFV…GAIF, LAND…LVYM, FFGV…PFSG, GNFI…YSLF, and TILG…PVVM.

The protein belongs to the CPA3 antiporters (TC 2.A.63) subunit D family. As to quaternary structure, may form a heterooligomeric complex that consists of seven subunits: mnhA2, mnhB2, mnhC2, mnhD2, mnhE2, mnhF2 and mnhG2.

It localises to the cell membrane. In Staphylococcus haemolyticus (strain JCSC1435), this protein is Putative antiporter subunit mnhD2 (mnhD2).